Consider the following 1416-residue polypeptide: Isonitrile lipopeptide synthase (1416 aa).

A coiled-coil region spans residues 188 to 215; it reads LRETAKVAEALRRQADAVQRELTAEAGQ. The Carrier domain occupies 965 to 1028; it reads RVWSRHLGRP…NLVCDLGSNP (64 aa). Ser-988 carries the post-translational modification O-(pantetheine 4'-phosphoryl)serine.

It belongs to the ATP-dependent AMP-binding enzyme family. Requires pantetheine 4'-phosphate as cofactor.

It catalyses the reaction 2 a (3R)-3-isocyanyl-fatty acyl-[ACP] + L-lysine + ATP + 2 NADPH = an isonitrile lipopeptide + 2 holo-[ACP] + AMP + diphosphate + 2 NADP(+). Functionally, nonribosomal peptide synthetase (NRPS) involved in the biosynthesis of a unique class of isonitrile lipopeptides (INLPs) that seem to play a role in metal acquisition in M.marinum. Catalyzes the final step in the pathway, i.e. the condensation of a (3R)-3-isocyanyl-fatty acyl-[ACP] to both amino groups of a lysine, producing isonitrile lipopeptides. This Mycobacterium marinum (strain ATCC BAA-535 / M) protein is Isonitrile lipopeptide synthase.